Reading from the N-terminus, the 275-residue chain is Arylamine N-acetyltransferase (275 aa).

Residue cysteine 70 is the Acyl-thioester intermediate of the active site. Catalysis depends on residues histidine 110 and aspartate 127.

It belongs to the arylamine N-acetyltransferase family. In terms of assembly, homodimer and homotetramer.

It carries out the reaction an arylamine + acetyl-CoA = an N-acetylarylamine + CoA. Functionally, catalyzes the transfer of the acetyl group from acetyl coenzyme A to the free amino group of arylamines and hydrazines. Substrates include isoniazid, anisidine, and 4-aminoveratrole, and to a much lesser extent, p-aminobenzoic acid. This chain is Arylamine N-acetyltransferase, found in Mycolicibacterium smegmatis (Mycobacterium smegmatis).